The chain runs to 395 residues: Guanine nucleotide-binding protein subunit beta-5 (395 aa).

WD repeat units follow at residues 103–142 (GHGN…KEHA), 145–184 (MPCT…NENM), 193–234 (MHTN…QSFH), 236–278 (HGAD…QAFE), 279–318 (THES…EVAI), 320–362 (SKES…RVSI), and 365–394 (GHEN…LRVW).

It belongs to the WD repeat G protein beta family. As to quaternary structure, component of a complex composed of RGS9 (isoform RGS9-1), GNB5 and RGS9BP; within this complex, the presence of GNB5 stabilizes both itself and RGS9 and increases RGS9 GTPase-activating protein (GAP) activity. Interacts with RGS7, forming the RGS7-GNB5 complex; within this complex, the presence of GNB5 increases RGS7 GTPase-activating protein (GAP) activity. Interacts with GPR158; promotes the GTPase activator activity of the RGS7-GNB5 complex in absence of glycine, in contrast GTPase activator activity of the RGS7-GNB5 complex is inhibited in presence of glycine. Interacts with RGS6. As to expression, widely expressed.

The protein resides in the membrane. Functionally, enhances GTPase-activating protein (GAP) activity of regulator of G protein signaling (RGS) proteins, such as RGS7 and RGS9, hence involved in the termination of the signaling initiated by the G protein coupled receptors (GPCRs) by accelerating the GTP hydrolysis on the G-alpha subunits, thereby promoting their inactivation. Increases RGS7 GTPase-activating protein (GAP) activity, thereby regulating mood and cognition. Increases RGS9 GTPase-activating protein (GAP) activity, hence contributes to the deactivation of G protein signaling initiated by D(2) dopamine receptors. May play an important role in neuronal signaling, including in the parasympathetic, but not sympathetic, control of heart rate. This chain is Guanine nucleotide-binding protein subunit beta-5 (GNB5), found in Homo sapiens (Human).